Reading from the N-terminus, the 365-residue chain is S-adenosylmethionine:tRNA ribosyltransferase-isomerase (365 aa).

This sequence belongs to the QueA family. In terms of assembly, monomer.

The protein resides in the cytoplasm. It carries out the reaction 7-aminomethyl-7-carbaguanosine(34) in tRNA + S-adenosyl-L-methionine = epoxyqueuosine(34) in tRNA + adenine + L-methionine + 2 H(+). Its pathway is tRNA modification; tRNA-queuosine biosynthesis. Functionally, transfers and isomerizes the ribose moiety from AdoMet to the 7-aminomethyl group of 7-deazaguanine (preQ1-tRNA) to give epoxyqueuosine (oQ-tRNA). In Helicobacter hepaticus (strain ATCC 51449 / 3B1), this protein is S-adenosylmethionine:tRNA ribosyltransferase-isomerase.